The chain runs to 218 residues: MSIGIVGRKAGMTRVFTEDGASVPVTVIEASPNRVTQVRTPERDGYSGVQVTAGSRRPNRVSKPMAGHFAAAGVDAGRGVWEFRVSDGQAIELEAGKELTVETFEAGQVVDITGTSKGKGFAGTVKRHNFRTQDATHGNSLAHRAPGSIGQNQTPGRVFKGKKMAGQMGNKRSTVKNLEVVRVDAERHLLLVRGSVPGAVGSDVIVRPARNQRKKGDS.

N5-methylglutamine is present on Q153.

Belongs to the universal ribosomal protein uL3 family. As to quaternary structure, part of the 50S ribosomal subunit. Forms a cluster with proteins L14 and L19. In terms of processing, methylated by PrmB.

Its function is as follows. One of the primary rRNA binding proteins, it binds directly near the 3'-end of the 23S rRNA, where it nucleates assembly of the 50S subunit. This chain is Large ribosomal subunit protein uL3, found in Alkalilimnicola ehrlichii (strain ATCC BAA-1101 / DSM 17681 / MLHE-1).